Reading from the N-terminus, the 567-residue chain is MATMSRQAYADMFGPTTGDRVRLADTDLWIQVEKDFTVYGDEVKFGGGKVIRDGMGQSQLPSAKVMDLVITNALILDYWGIVKADIGIKNGRIAAIGKAGNPDVQPNVDIIVGPGTDVIAGEGSIITAGGIDSHIHFICPQQIDEALASGVTTMIGGGTGPTTGTNATTVTPGPWNMARMLEAADCFPMNLGFLGKGNASLPESLSEQISAGAIGLKLHEDWGTTPASIDNCLSVAEETDTQVAIHTDTLNESGFVEDTIAAFKDRTIHTYHTEGAGGGHAPDIIRAAGLANVLPSSTNPTRPYTVNTADEHLDMLMVCHHLDPSIPEDVAFAESRIRRETIAAEDILHDLGAFSMIASDSQAMGRVGEVVMRTWQTAHKMKVQRGSLKGDPSEHDNFRAKRYVAKYTINPALAHGMAHEIGSVEVGKLADLVLWSPAFFGVKPNLIIKGGMIAMAKMGDPNASIPTPQPVHYRPMFGAYGKARQATTMTFISQAAMDAGIPEQLTLANRIGVVKGCRTVKKKDMLLNDWLPHLEVDPQTYEVRADGQLLTCEPAEVLPMAQRYFLF.

The Urease domain maps to 129–567; the sequence is GGIDSHIHFI…LPMAQRYFLF (439 aa). Ni(2+) is bound by residues H134, H136, and K217. K217 is modified (N6-carboxylysine). H219 is a substrate binding site. The Ni(2+) site is built by H246 and H272. The active-site Proton donor is the H320. Position 360 (D360) interacts with Ni(2+).

Belongs to the metallo-dependent hydrolases superfamily. Urease alpha subunit family. Heterotrimer of UreA (gamma), UreB (beta) and UreC (alpha) subunits. Three heterotrimers associate to form the active enzyme. It depends on Ni cation as a cofactor. In terms of processing, carboxylation allows a single lysine to coordinate two nickel ions.

It is found in the cytoplasm. The catalysed reaction is urea + 2 H2O + H(+) = hydrogencarbonate + 2 NH4(+). It participates in nitrogen metabolism; urea degradation; CO(2) and NH(3) from urea (urease route): step 1/1. This chain is Urease subunit alpha, found in Alcanivorax borkumensis (strain ATCC 700651 / DSM 11573 / NCIMB 13689 / SK2).